The primary structure comprises 273 residues: Translation initiation factor IF-3, mitochondrial (273 aa).

The N-terminal 32 residues, M1–G32, are a transit peptide targeting the mitochondrion. Positions P33–L92 are cleaved as a propeptide — removed in mature form. The segment at E242–Q273 is disordered. Positions T252–D265 are enriched in basic and acidic residues.

Belongs to the IF-3 family.

Its subcellular location is the mitochondrion. In terms of biological role, IF-3 binds to the 28S ribosomal subunit and shifts the equilibrium between 55S ribosomes and their 39S and 28S subunits in favor of the free subunits, thus enhancing the availability of 28S subunits on which protein synthesis initiation begins. The protein is Translation initiation factor IF-3, mitochondrial (MTIF3) of Bos taurus (Bovine).